Here is a 162-residue protein sequence, read N- to C-terminus: 2-C-methyl-D-erythritol 2,4-cyclodiphosphate synthase (162 aa).

A divalent metal cation contacts are provided by Asp-8 and His-10. 4-CDP-2-C-methyl-D-erythritol 2-phosphate contacts are provided by residues 8–10 (DVH) and 36–37 (HS). His-44 is a binding site for a divalent metal cation. Residues 58–60 (DIG), 63–67 (FPDTD), 102–108 (AQAPKMA), 134–137 (TTTE), Phe-141, and Arg-144 contribute to the 4-CDP-2-C-methyl-D-erythritol 2-phosphate site.

The protein belongs to the IspF family. As to quaternary structure, homotrimer. A divalent metal cation is required as a cofactor.

The enzyme catalyses 4-CDP-2-C-methyl-D-erythritol 2-phosphate = 2-C-methyl-D-erythritol 2,4-cyclic diphosphate + CMP. It functions in the pathway isoprenoid biosynthesis; isopentenyl diphosphate biosynthesis via DXP pathway; isopentenyl diphosphate from 1-deoxy-D-xylulose 5-phosphate: step 4/6. Functionally, involved in the biosynthesis of isopentenyl diphosphate (IPP) and dimethylallyl diphosphate (DMAPP), two major building blocks of isoprenoid compounds. Catalyzes the conversion of 4-diphosphocytidyl-2-C-methyl-D-erythritol 2-phosphate (CDP-ME2P) to 2-C-methyl-D-erythritol 2,4-cyclodiphosphate (ME-CPP) with a corresponding release of cytidine 5-monophosphate (CMP). This chain is 2-C-methyl-D-erythritol 2,4-cyclodiphosphate synthase, found in Yersinia enterocolitica serotype O:8 / biotype 1B (strain NCTC 13174 / 8081).